A 600-amino-acid polypeptide reads, in one-letter code: Dihydroxy-acid dehydratase (600 aa).

Residue aspartate 82 coordinates Mg(2+). Cysteine 123 contributes to the [2Fe-2S] cluster binding site. Residues aspartate 124 and lysine 125 each contribute to the Mg(2+) site. Position 125 is an N6-carboxylysine (lysine 125). Residue cysteine 192 participates in [2Fe-2S] cluster binding. Residue glutamate 489 coordinates Mg(2+). The active-site Proton acceptor is the serine 515.

It belongs to the IlvD/Edd family. In terms of assembly, homodimer. Requires [2Fe-2S] cluster as cofactor. The cofactor is Mg(2+).

The catalysed reaction is (2R)-2,3-dihydroxy-3-methylbutanoate = 3-methyl-2-oxobutanoate + H2O. The enzyme catalyses (2R,3R)-2,3-dihydroxy-3-methylpentanoate = (S)-3-methyl-2-oxopentanoate + H2O. Its pathway is amino-acid biosynthesis; L-isoleucine biosynthesis; L-isoleucine from 2-oxobutanoate: step 3/4. It functions in the pathway amino-acid biosynthesis; L-valine biosynthesis; L-valine from pyruvate: step 3/4. Its function is as follows. Functions in the biosynthesis of branched-chain amino acids. Catalyzes the dehydration of (2R,3R)-2,3-dihydroxy-3-methylpentanoate (2,3-dihydroxy-3-methylvalerate) into 2-oxo-3-methylpentanoate (2-oxo-3-methylvalerate) and of (2R)-2,3-dihydroxy-3-methylbutanoate (2,3-dihydroxyisovalerate) into 2-oxo-3-methylbutanoate (2-oxoisovalerate), the penultimate precursor to L-isoleucine and L-valine, respectively. In Bacteroides thetaiotaomicron (strain ATCC 29148 / DSM 2079 / JCM 5827 / CCUG 10774 / NCTC 10582 / VPI-5482 / E50), this protein is Dihydroxy-acid dehydratase.